We begin with the raw amino-acid sequence, 69 residues long: DNA-directed RNA polymerase subunit omega (69 aa).

This sequence belongs to the RNA polymerase subunit omega family. The RNAP catalytic core consists of 2 alpha, 1 beta, 1 beta' and 1 omega subunit. When a sigma factor is associated with the core the holoenzyme is formed, which can initiate transcription.

The enzyme catalyses RNA(n) + a ribonucleoside 5'-triphosphate = RNA(n+1) + diphosphate. In terms of biological role, promotes RNA polymerase assembly. Latches the N- and C-terminal regions of the beta' subunit thereby facilitating its interaction with the beta and alpha subunits. The protein is DNA-directed RNA polymerase subunit omega of Symbiobacterium thermophilum (strain DSM 24528 / JCM 14929 / IAM 14863 / T).